The primary structure comprises 405 residues: Calsequestrin-1 (405 aa).

Positions 1-34 (MRATDRMGARAVSELRLALLFVLVLGTPRLGVQG) are cleaved as a signal peptide. Tyr43 is modified (phosphotyrosine). At Ser81 the chain carries Phosphoserine. Phosphothreonine is present on Thr124. Ser216 is subject to Phosphoserine. A glycan (N-linked (GlcNAc...) asparagine) is linked at Asn350. A disordered region spans residues 382–405 (EGEINTEDDDDDDDDDDDDDDDDD).

The protein belongs to the calsequestrin family. In terms of assembly, monomer; increases in response to a depletion of intracellular calcium. Homodimer. Homotetramer and homopolymer. Can form linear homooligomers. Ca(2+) ions promote oligomerization. Interacts (via C-terminal end and preferentially with the monomeric form) with STIM1; this interaction increases in response to a depletion of intracellular calcium, decreases both STIM1 aggregation and clustering, interaction of STIM1 with ORAI1 and store-operated Ca(2+) entry (SOCE) activity. Interacts with ASPH and TRDN. In terms of processing, N-glycosylated. As to expression, detected in skeletal muscle (at protein level). Detected in skeletal muscle.

Its subcellular location is the endoplasmic reticulum. The protein localises to the sarcoplasmic reticulum. It localises to the sarcoplasmic reticulum lumen. The protein resides in the sarcoplasmic reticulum membrane. It is found in the mitochondrion matrix. Functionally, calsequestrin is a high-capacity, moderate affinity, calcium-binding protein and thus acts as an internal calcium store in muscle. Calcium ions are bound by clusters of acidic residues at the protein surface, often at the interface between subunits. Can bind around 80 Ca(2+) ions. Regulates the release of lumenal Ca(2+) via the calcium release channel RYR1; this plays an important role in triggering muscle contraction. Negatively regulates store-operated Ca(2+) entry (SOCE) activity. This Mus musculus (Mouse) protein is Calsequestrin-1 (Casq1).